A 237-amino-acid chain; its full sequence is NAD-dependent protein deacylase (237 aa).

Residues 1–235 (MRVAVLSGAG…PGLLERLPAL (235 aa)) form the Deacetylase sirtuin-type domain. Residue 8-28 (GAGISAESGVPTFRDDKNGLW) coordinates NAD(+). Substrate-binding residues include tyrosine 53 and arginine 56. Residue 86-89 (QNVD) coordinates NAD(+). Histidine 104 acts as the Proton acceptor in catalysis. Residues cysteine 112, cysteine 115, cysteine 138, and cysteine 140 each coordinate Zn(2+). Residues 177–179 (GTS), 203–205 (NPE), and alanine 221 each bind NAD(+).

It belongs to the sirtuin family. Class III subfamily. Requires Zn(2+) as cofactor.

It localises to the cytoplasm. It carries out the reaction N(6)-acetyl-L-lysyl-[protein] + NAD(+) + H2O = 2''-O-acetyl-ADP-D-ribose + nicotinamide + L-lysyl-[protein]. It catalyses the reaction N(6)-succinyl-L-lysyl-[protein] + NAD(+) + H2O = 2''-O-succinyl-ADP-D-ribose + nicotinamide + L-lysyl-[protein]. Its function is as follows. NAD-dependent lysine deacetylase and desuccinylase that specifically removes acetyl and succinyl groups on target proteins. Modulates the activities of several proteins which are inactive in their acylated form. This is NAD-dependent protein deacylase from Mycobacterium bovis (strain ATCC BAA-935 / AF2122/97).